The sequence spans 342 residues: L-threonine 3-dehydrogenase (342 aa).

C38 is a Zn(2+) binding site. Residues T40 and H43 each act as charge relay system in the active site. Zn(2+) is bound by residues H63, E64, C93, C96, C99, and C107. NAD(+) contacts are provided by residues I175, D195, R200, 262–264 (LGI), and 286–287 (IY).

This sequence belongs to the zinc-containing alcohol dehydrogenase family. Homotetramer. Requires Zn(2+) as cofactor.

The protein resides in the cytoplasm. It catalyses the reaction L-threonine + NAD(+) = (2S)-2-amino-3-oxobutanoate + NADH + H(+). The protein operates within amino-acid degradation; L-threonine degradation via oxydo-reductase pathway; glycine from L-threonine: step 1/2. In terms of biological role, catalyzes the NAD(+)-dependent oxidation of L-threonine to 2-amino-3-ketobutyrate. The protein is L-threonine 3-dehydrogenase of Paraburkholderia phymatum (strain DSM 17167 / CIP 108236 / LMG 21445 / STM815) (Burkholderia phymatum).